We begin with the raw amino-acid sequence, 536 residues long: T-complex protein 1 subunit delta (536 aa).

The interval 1–21 is disordered; that stretch reads MAAVAAPMASKPRGSKAESFV.

Belongs to the TCP-1 chaperonin family. In terms of assembly, heterooligomeric complex of about 850 to 900 kDa that forms two stacked rings, 12 to 16 nm in diameter.

It localises to the cytoplasm. Its function is as follows. Molecular chaperone; assists the folding of proteins upon ATP hydrolysis. Known to play a role, in vitro, in the folding of actin and tubulin. This chain is T-complex protein 1 subunit delta, found in Arabidopsis thaliana (Mouse-ear cress).